The sequence spans 103 residues: NADH-quinone oxidoreductase subunit K (103 aa).

Helical transmembrane passes span 6-26 (IEYY…GFLL), 30-50 (LLVL…TLVA), and 66-86 (FFVI…VLAF).

The protein belongs to the complex I subunit 4L family. NDH-1 is composed of 14 different subunits. Subunits NuoA, H, J, K, L, M, N constitute the membrane sector of the complex.

Its subcellular location is the cell inner membrane. The enzyme catalyses a quinone + NADH + 5 H(+)(in) = a quinol + NAD(+) + 4 H(+)(out). NDH-1 shuttles electrons from NADH, via FMN and iron-sulfur (Fe-S) centers, to quinones in the respiratory chain. The immediate electron acceptor for the enzyme in this species is believed to be ubiquinone. Couples the redox reaction to proton translocation (for every two electrons transferred, four hydrogen ions are translocated across the cytoplasmic membrane), and thus conserves the redox energy in a proton gradient. This chain is NADH-quinone oxidoreductase subunit K, found in Sorangium cellulosum (strain So ce56) (Polyangium cellulosum (strain So ce56)).